The following is a 114-amino-acid chain: UPF0212 protein UNCMA_00570 (114 aa).

This sequence belongs to the UPF0212 family.

This is UPF0212 protein UNCMA_00570 from Methanocella arvoryzae (strain DSM 22066 / NBRC 105507 / MRE50).